A 705-amino-acid polypeptide reads, in one-letter code: Choline transporter-like protein 2 (705 aa).

Residues 1 to 33 (MGKDSQHYYGKHGTPQKYDPTFKGPIYNRGCTD) are Cytoplasmic-facing. Thr-14 is subject to Phosphothreonine. Residues 34-54 (IICCVLLFLAIVGYVAVGIIA) traverse the membrane as a helical segment. Residues 55-232 (WTHGDPRKVI…QIFEDYTVSW (178 aa)) are Extracellular-facing. 2 N-linked (GlcNAc...) asparagine glycosylation sites follow: Asn-187 and Asn-200. The chain crosses the membrane as a helical span at residues 233 to 253 (YWIVIGLVIAMLLSLMFIVLL). Residues 254–256 (RFL) lie on the Cytoplasmic side of the membrane. Residues 257 to 277 (AGVMVWVMIVMVILVLGYGIF) traverse the membrane as a helical segment. The Extracellular segment spans residues 278 to 315 (HCYAEYSRLRGEAGSDVSLVDLGFQTDLRVYLHLRQTW). Residues 316–336 (MAFMIILSILEVVIILLLIFL) form a helical membrane-spanning segment. Residues 337–364 (RKRILIAIALIKEASRAVGHVMCSMLYP) are Cytoplasmic-facing. A helical membrane pass occupies residues 365–385 (LVTFFLLCLCIAYWASTSVFL). Over 386–453 (STSNVAVYKI…LQIFNAFMFF (68 aa)) the chain is Extracellular. The N-linked (GlcNAc...) asparagine glycan is linked to Asn-416. The chain crosses the membrane as a helical span at residues 454–476 (WLANFVLALGQVTLAGAFASYYW). The Cytoplasmic portion of the chain corresponds to 477–503 (AMRKPDDMPAFPLFSAFGRALRYHTGS). Residues 504–524 (LAFGSLILAIVQIIRVMLEYL) traverse the membrane as a helical segment. The Extracellular segment spans residues 525–562 (DQRLKAAQNKFAKFLMVCLKCCFWCLEKFIKFLNRNAY). A helical transmembrane segment spans residues 563–583 (IMIAIYGTNFCTSARNAFFLL). Residues 584 to 598 (MRNIIRVAVLDKVTD) lie on the Cytoplasmic side of the membrane. Residues 599-619 (FLFLLGKLLIVGSVGILAFFF) form a helical membrane-spanning segment. Topologically, residues 620 to 637 (FTHRIRIVQDTAPPLNYY) are extracellular. A helical transmembrane segment spans residues 638 to 658 (WVPILTVIIGSYLIAHGFFSV). Over 659 to 705 (YGMCVDTLFLCFLEDLERNDGSAERPYFMSSTLKKLLNKTNKKVAES) the chain is Cytoplasmic.

This sequence belongs to the CTL (choline transporter-like) family. Interacts with COCH. N-glycosylated.

Its subcellular location is the cell membrane. The protein localises to the mitochondrion outer membrane. The enzyme catalyses choline(out) + n H(+)(in) = choline(in) + n H(+)(out). It carries out the reaction ethanolamine(out) + n H(+)(in) = ethanolamine(in) + n H(+)(out). In terms of biological role, exhibits choline transporter activity, as choline/H+ antiporter. Also acts as a low-affinity ethanolamine/H+ antiporter, regulating the supply of extracellular ethanolamine (Etn) for the CDP-Etn pathway, redistribute intracellular Etn and balance the CDP-Cho and CDP-Etn arms of the Kennedy pathway. This chain is Choline transporter-like protein 2 (Slc44a2), found in Rattus norvegicus (Rat).